Consider the following 235-residue polypeptide: Phosphoribosylformylglycinamidine synthase subunit PurQ (235 aa).

The region spanning 4 to 234 is the Glutamine amidotransferase type-1 domain; it reads GILVFPGTNC…VQHLTGRVIR (231 aa). Catalysis depends on C86, which acts as the Nucleophile. Active-site residues include H203 and E205.

Part of the FGAM synthase complex composed of 1 PurL, 1 PurQ and 2 PurS subunits.

Its subcellular location is the cytoplasm. The enzyme catalyses N(2)-formyl-N(1)-(5-phospho-beta-D-ribosyl)glycinamide + L-glutamine + ATP + H2O = 2-formamido-N(1)-(5-O-phospho-beta-D-ribosyl)acetamidine + L-glutamate + ADP + phosphate + H(+). It catalyses the reaction L-glutamine + H2O = L-glutamate + NH4(+). Its pathway is purine metabolism; IMP biosynthesis via de novo pathway; 5-amino-1-(5-phospho-D-ribosyl)imidazole from N(2)-formyl-N(1)-(5-phospho-D-ribosyl)glycinamide: step 1/2. In terms of biological role, part of the phosphoribosylformylglycinamidine synthase complex involved in the purines biosynthetic pathway. Catalyzes the ATP-dependent conversion of formylglycinamide ribonucleotide (FGAR) and glutamine to yield formylglycinamidine ribonucleotide (FGAM) and glutamate. The FGAM synthase complex is composed of three subunits. PurQ produces an ammonia molecule by converting glutamine to glutamate. PurL transfers the ammonia molecule to FGAR to form FGAM in an ATP-dependent manner. PurS interacts with PurQ and PurL and is thought to assist in the transfer of the ammonia molecule from PurQ to PurL. This chain is Phosphoribosylformylglycinamidine synthase subunit PurQ, found in Symbiobacterium thermophilum (strain DSM 24528 / JCM 14929 / IAM 14863 / T).